The primary structure comprises 310 residues: Isoflavone reductase homolog A622 (310 aa).

NADP(+)-binding positions include 13–19 (GGTGYIG), R38, and K47. The Proton acceptor role is filled by K135. R139 is a binding site for NADP(+).

Belongs to the NmrA-type oxidoreductase family. Isoflavone reductase subfamily. As to quaternary structure, monomer.

It is found in the cytoplasm. It functions in the pathway alkaloid biosynthesis; nicotine biosynthesis. Its function is as follows. NADPH-binding protein. Involved in the biosynthesis of pyridine alkaloid natural products, leading mainly to the production of anabasine, anatabine, nicotine and nornicotine, effective deterrents against herbivores with antiparasitic and pesticide properties (neurotoxins); nornicotine serves as the precursor in the synthesis of the carcinogen compound N'-nitrosonornicotine (NNN). Reductase involved in a late step of tobacco alkaloid biosynthesis. Triggers either the formation of a nicotinic acid-derived precursor or the final condensation reaction of tobacco alkaloids. The polypeptide is Isoflavone reductase homolog A622 (Nicotiana glauca (Glaucous tobacco)).